Reading from the N-terminus, the 220-residue chain is 7-cyano-7-deazaguanine synthase (220 aa).

10–20 (FSGGQDSTTCL) provides a ligand contact to ATP. The Zn(2+) site is built by cysteine 186, cysteine 195, cysteine 198, and cysteine 201.

Belongs to the QueC family. In terms of assembly, homodimer. Requires Zn(2+) as cofactor.

The catalysed reaction is 7-carboxy-7-deazaguanine + NH4(+) + ATP = 7-cyano-7-deazaguanine + ADP + phosphate + H2O + H(+). It participates in purine metabolism; 7-cyano-7-deazaguanine biosynthesis. In terms of biological role, catalyzes the ATP-dependent conversion of 7-carboxy-7-deazaguanine (CDG) to 7-cyano-7-deazaguanine (preQ(0)). This Bacillus anthracis (strain A0248) protein is 7-cyano-7-deazaguanine synthase.